Here is a 172-residue protein sequence, read N- to C-terminus: ATP synthase subunit b (172 aa).

The helical transmembrane segment at Leu-27–Glu-47 threads the bilayer.

This sequence belongs to the ATPase B chain family. As to quaternary structure, F-type ATPases have 2 components, F(1) - the catalytic core - and F(0) - the membrane proton channel. F(1) has five subunits: alpha(3), beta(3), gamma(1), delta(1), epsilon(1). F(0) has four main subunits: a(1), b(1), b'(1) and c(10-14). The alpha and beta chains form an alternating ring which encloses part of the gamma chain. F(1) is attached to F(0) by a central stalk formed by the gamma and epsilon chains, while a peripheral stalk is formed by the delta, b and b' chains.

The protein resides in the cellular thylakoid membrane. Its function is as follows. F(1)F(0) ATP synthase produces ATP from ADP in the presence of a proton or sodium gradient. F-type ATPases consist of two structural domains, F(1) containing the extramembraneous catalytic core and F(0) containing the membrane proton channel, linked together by a central stalk and a peripheral stalk. During catalysis, ATP synthesis in the catalytic domain of F(1) is coupled via a rotary mechanism of the central stalk subunits to proton translocation. Component of the F(0) channel, it forms part of the peripheral stalk, linking F(1) to F(0). This chain is ATP synthase subunit b, found in Prochlorococcus marinus (strain MIT 9303).